The chain runs to 1205 residues: Nitric oxide synthase 3 (1205 aa).

The segment at 1–73 (MGNLKSVGQE…PPDGPKFPRV (73 aa)) is disordered. Gly-2 carries the N-myristoyl glycine lipid modification. S-palmitoyl cysteine attachment occurs at residues Cys-15 and Cys-26. Residues 15-27 (CGLGLGLGLGLCG) show a composition bias toward gly residues. Residues 44–54 (LAPPPSPPPAP) are compositionally biased toward pro residues. Positions 96 and 101 each coordinate Zn(2+). Positions 100 to 488 (RCLGSLVFPR…TDPWKGSASK (389 aa)) are interaction with NOSIP. Residue Ser-104 participates in (6R)-L-erythro-5,6,7,8-tetrahydrobiopterin binding. A Phosphoserine; by CDK5 modification is found at Ser-116. Cys-186 is a binding site for heme b. L-arginine-binding residues include Gln-249, Trp-358, Tyr-359, Glu-363, and Asn-368. The (6R)-L-erythro-5,6,7,8-tetrahydrobiopterin site is built by Ala-448, Trp-449, and Phe-462. Tyr-477 is a binding site for heme b. The calmodulin-binding stretch occupies residues 492–512 (VTRKKTFKEVANAVKISASLM). Thr-497 is modified (phosphothreonine; by AMPK). The region spanning 522–705 (ATILYGSETG…AFGGWAQAAF (184 aa)) is the Flavodoxin-like domain. Residues Ser-528, Glu-529, Thr-530, Arg-532, Ser-574, and Thr-575 each contribute to the FMN site. Phosphoserine occurs at positions 617, 635, and 640. Residues Ser-656, Cys-663, Glu-689, and Gln-693 each contribute to the FMN site. An FAD-binding FR-type domain is found at 758 to 1004 (RKMVQATVLA…IRGAPSFRLP (247 aa)). Arg-778 is an NADP(+) binding site. His-800 is an FAD binding site. Residues 819–850 (VEDPPPPGEPVAVEQLEKGSPGGPPPSWVRDP) are disordered. Ser-838 carries the post-translational modification Phosphoserine. FAD-binding residues include Arg-940, Tyr-942, Ser-943, Thr-958, Ala-960, Tyr-964, Val-977, Cys-978, and Ser-979. Residues Thr-1018, Arg-1051, Ser-1080, Arg-1081, Lys-1087, Tyr-1089, and Gln-1091 each contribute to the NADP(+) site. Residue Thr-1177 is modified to Phosphothreonine. The residue at position 1179 (Ser-1179) is a Phosphoserine; by AMPK. At Ser-1181 the chain carries Phosphoserine.

The protein belongs to the NOS family. Homodimer. Interacts with NOSIP and NOSTRIN. Interacts with HSP90AB1. Forms a complex with ASL, ASS1 and SLC7A1; the complex regulates cell-autonomous L-arginine synthesis and citrulline recycling while channeling extracellular L-arginine to nitric oxide synthesis pathway. Heme b serves as cofactor. The cofactor is FAD. FMN is required as a cofactor. Requires (6R)-L-erythro-5,6,7,8-tetrahydrobiopterin as cofactor. In terms of processing, phosphorylation by AMPK at Ser-1179 in the presence of Ca(2+)-calmodulin (CaM) activates activity. In absence of Ca(2+)-calmodulin, AMPK also phosphorylates Thr-497, resulting in inhibition of activity. Phosphorylation of Ser-116 by CDK5 reduces activity.

It localises to the membrane. The protein localises to the caveola. Its subcellular location is the cytoplasm. It is found in the cytoskeleton. The protein resides in the golgi apparatus. It localises to the cell membrane. The catalysed reaction is 2 L-arginine + 3 NADPH + 4 O2 + H(+) = 2 L-citrulline + 2 nitric oxide + 3 NADP(+) + 4 H2O. With respect to regulation, stimulated by calcium/calmodulin. Inhibited by NOSIP and NOSTRIN. Functionally, produces nitric oxide (NO) which is implicated in vascular smooth muscle relaxation through a cGMP-mediated signal transduction pathway. NO mediates vascular endothelial growth factor (VEGF)-induced angiogenesis in coronary vessels and promotes blood clotting through the activation of platelets. The polypeptide is Nitric oxide synthase 3 (NOS3) (Canis lupus familiaris (Dog)).